The following is a 237-amino-acid chain: tRNA (guanine-N(7)-)-methyltransferase (237 aa).

Positions 35, 60, 87, and 113 each coordinate S-adenosyl-L-methionine. Asp113 is an active-site residue. Substrate is bound by residues Lys117 and Asp149.

Belongs to the class I-like SAM-binding methyltransferase superfamily. TrmB family.

It carries out the reaction guanosine(46) in tRNA + S-adenosyl-L-methionine = N(7)-methylguanosine(46) in tRNA + S-adenosyl-L-homocysteine. The protein operates within tRNA modification; N(7)-methylguanine-tRNA biosynthesis. In terms of biological role, catalyzes the formation of N(7)-methylguanine at position 46 (m7G46) in tRNA. In Synechococcus sp. (strain WH7803), this protein is tRNA (guanine-N(7)-)-methyltransferase.